The following is an 83-amino-acid chain: uncharacterized protein (83 aa).

This sequence belongs to the chlamydial CPn_0711/CT_665/TC_0036 family.

This is an uncharacterized protein from Chlamydia trachomatis serovar D (strain ATCC VR-885 / DSM 19411 / UW-3/Cx).